We begin with the raw amino-acid sequence, 179 residues long: Large ribosomal subunit protein uL5 (179 aa).

Belongs to the universal ribosomal protein uL5 family. Part of the 50S ribosomal subunit; part of the 5S rRNA/L5/L18/L25 subcomplex. Contacts the 5S rRNA and the P site tRNA. Forms a bridge to the 30S subunit in the 70S ribosome.

This is one of the proteins that bind and probably mediate the attachment of the 5S RNA into the large ribosomal subunit, where it forms part of the central protuberance. In the 70S ribosome it contacts protein S13 of the 30S subunit (bridge B1b), connecting the 2 subunits; this bridge is implicated in subunit movement. Contacts the P site tRNA; the 5S rRNA and some of its associated proteins might help stabilize positioning of ribosome-bound tRNAs. This chain is Large ribosomal subunit protein uL5, found in Bacillus velezensis (strain DSM 23117 / BGSC 10A6 / LMG 26770 / FZB42) (Bacillus amyloliquefaciens subsp. plantarum).